The chain runs to 890 residues: DNA mismatch repair protein MutS (890 aa).

An ATP-binding site is contributed by 607–614; sequence GPNMSGKS. The segment at 832–851 is disordered; the sequence is ESQLSFFGGEQSSKKQDKPL.

It belongs to the DNA mismatch repair MutS family.

In terms of biological role, this protein is involved in the repair of mismatches in DNA. It is possible that it carries out the mismatch recognition step. This protein has a weak ATPase activity. The protein is DNA mismatch repair protein MutS of Bacillus cereus (strain B4264).